Here is a 272-residue protein sequence, read N- to C-terminus: Putative pyruvate, phosphate dikinase regulatory protein (272 aa).

ADP is bound at residue 153 to 160 (GVSRTSKT).

This sequence belongs to the pyruvate, phosphate/water dikinase regulatory protein family. PDRP subfamily.

The catalysed reaction is N(tele)-phospho-L-histidyl/L-threonyl-[pyruvate, phosphate dikinase] + ADP = N(tele)-phospho-L-histidyl/O-phospho-L-threonyl-[pyruvate, phosphate dikinase] + AMP + H(+). The enzyme catalyses N(tele)-phospho-L-histidyl/O-phospho-L-threonyl-[pyruvate, phosphate dikinase] + phosphate + H(+) = N(tele)-phospho-L-histidyl/L-threonyl-[pyruvate, phosphate dikinase] + diphosphate. Bifunctional serine/threonine kinase and phosphorylase involved in the regulation of the pyruvate, phosphate dikinase (PPDK) by catalyzing its phosphorylation/dephosphorylation. This is Putative pyruvate, phosphate dikinase regulatory protein from Streptococcus sanguinis (strain SK36).